Reading from the N-terminus, the 169-residue chain is NAD(P)H-quinone oxidoreductase subunit J, chloroplastic (169 aa).

Belongs to the complex I 30 kDa subunit family. As to quaternary structure, NDH is composed of at least 16 different subunits, 5 of which are encoded in the nucleus.

The protein resides in the plastid. Its subcellular location is the chloroplast thylakoid membrane. It catalyses the reaction a plastoquinone + NADH + (n+1) H(+)(in) = a plastoquinol + NAD(+) + n H(+)(out). The enzyme catalyses a plastoquinone + NADPH + (n+1) H(+)(in) = a plastoquinol + NADP(+) + n H(+)(out). NDH shuttles electrons from NAD(P)H:plastoquinone, via FMN and iron-sulfur (Fe-S) centers, to quinones in the photosynthetic chain and possibly in a chloroplast respiratory chain. The immediate electron acceptor for the enzyme in this species is believed to be plastoquinone. Couples the redox reaction to proton translocation, and thus conserves the redox energy in a proton gradient. This chain is NAD(P)H-quinone oxidoreductase subunit J, chloroplastic, found in Zygnema circumcarinatum (Green alga).